An 823-amino-acid chain; its full sequence is MDPECSQLLPALCAVLADPRQPMADDTCLEKLLDWFKTITEAGSSLLLLQENPCLVELLCHMLKPQDLSSRVLSFSLRLTGVFAAQEDCFQYLQQGELLPRLFGEAGPLGGAAWTAPTVRSGWIQGLRSLARHPSALHFLADCGAVDTIFSLQGDSSLFVASAAGQLLVHILGLSMQGPADGPPSLQAGDWPACAQKIVDHIEESLRSAATPQITQALNVLTTTFGHCHDPWTRVLWVRLSPLVAGLLEKDPVPAAHSLVDLLLSVARSPGLSSSSCGLWETLAQTLSRLSPTQAGPLALGILKLQDCPQALRAQAFAVLLQPLACVLKATTQAPGASGMVDGTAGDSVTVDTLLPSKAACVGLLCRTLAHLELLLPLPQRPCPWPQASLLGAAVTLLQLCQGSASPTSDAGRHLCALLLGCVRVQRAALDFLGTLSQGTGPPELVTEVFAVLLEYLRSPDSSPTVLKKAFQATFRWLLSSPKTPGCWDLDPQALLFLRELLPVLQKRLCSPCWEVRDSGLEFLTQMTGRWGGQASFRHALLASEVPKLTEQLLRDPESYVRASAVAATGQLSSQGLCVSPASPEHLGGQQKSPLSELLHILSTDSEGFPRRAAMHVFTQWLRDSHADVVGDTEEFVAGVLQVASQDLDWEVRAQGLELALVFLEQTLGQPGSPCPYAVTPPVVAPARPLAQALQPLCRVRLFEFAFRALFDCDRPVAQKSCDLLLFLRAKTASSSSPQEARISPDVASVEAALQRWQAGDQAQPLGDLEPEVVLAVLRSMDLEGLRGALAESSDHVEKSPQSLLQDMLATVGILGENEADCY.

The required for interaction with NDFIP1 stretch occupies residues Pro100–Asp200. 2 HEAT repeats span residues Leu495–Trp531 and Ser544–Gly576. A Phosphoserine modification is found at Ser744. The BRAT1-like motif signature appears at Asp821–Tyr823. Residue Cys822 participates in Zn(2+) binding.

The protein belongs to the BRAT1 family. In terms of assembly, part of the multiprotein complex composed of BRAT1, WDR73, as well as integrator complex subunits INTS9 and INTS11. Interacts with BRCA1 and ATM. Interacts with MTOR and RPTOR. Interacts with NDFIP1. Interacts with SMC1A and PRKDC. In terms of processing, ubiquitinated by NEDD4, NEDD4L and ITCH; mono- and polyubiquitinated forms are detected.

It is found in the nucleus. It localises to the cytoplasm. Its function is as follows. Component of a multiprotein complex required for the assembly of the RNA endonuclease module of the integrator complex. Associates with INTS9 and INTS11 in the cytoplasm and blocks the active site of INTS11 to inhibit the endonuclease activity of INTS11 before formation of the full integrator complex. Following dissociation of WDR73 of the complex, BRAT1 facilitates the nuclear import of the INTS9-INTS11 heterodimer. In the nucleus, INTS4 is integrated to the INTS9-INTS11 heterodimer and BRAT1 is released from the mature RNA endonuclease module by inositol hexakisphosphate (InsP6). BRAT1 is also involved in DNA damage response; activates kinases ATM, SMC1A and PRKDC by modulating their phosphorylation status following ionizing radiation (IR) stress. Plays a role in regulating mitochondrial function and cell proliferation. Required for protein stability of MTOR and MTOR-related proteins, and cell cycle progress by growth factors. The chain is Integrator complex assembly factor BRAT1 (BRAT1) from Ailuropoda melanoleuca (Giant panda).